The sequence spans 244 residues: Phosphoadenosine 5'-phosphosulfate reductase (244 aa).

Residue C239 is the Nucleophile; cysteine thiosulfonate intermediate of the active site.

It belongs to the PAPS reductase family. CysH subfamily.

The protein localises to the cytoplasm. The enzyme catalyses [thioredoxin]-disulfide + sulfite + adenosine 3',5'-bisphosphate + 2 H(+) = [thioredoxin]-dithiol + 3'-phosphoadenylyl sulfate. It participates in sulfur metabolism; hydrogen sulfide biosynthesis; sulfite from sulfate: step 3/3. Catalyzes the formation of sulfite from phosphoadenosine 5'-phosphosulfate (PAPS) using thioredoxin as an electron donor. The protein is Phosphoadenosine 5'-phosphosulfate reductase of Klebsiella pneumoniae (strain 342).